Consider the following 195-residue polypeptide: Probable nicotinate-nucleotide adenylyltransferase (195 aa).

This sequence belongs to the NadD family.

The enzyme catalyses nicotinate beta-D-ribonucleotide + ATP + H(+) = deamido-NAD(+) + diphosphate. It participates in cofactor biosynthesis; NAD(+) biosynthesis; deamido-NAD(+) from nicotinate D-ribonucleotide: step 1/1. Functionally, catalyzes the reversible adenylation of nicotinate mononucleotide (NaMN) to nicotinic acid adenine dinucleotide (NaAD). The chain is Probable nicotinate-nucleotide adenylyltransferase from Mesorhizobium japonicum (strain LMG 29417 / CECT 9101 / MAFF 303099) (Mesorhizobium loti (strain MAFF 303099)).